Consider the following 333-residue polypeptide: uncharacterized protein (333 aa).

It belongs to the proline racemase family.

This is an uncharacterized protein from Vibrio parahaemolyticus serotype O3:K6 (strain RIMD 2210633).